Consider the following 706-residue polypeptide: Probable serine/threonine-protein kinase zyg-1 (706 aa).

The region spanning 13–249 is the Protein kinase domain; sequence YSHLKEIGKG…LTQIVLSEFM (237 aa). ATP-binding positions include 19–27 and lysine 41; that span reads IGKGGFGVV. Aspartate 131 (proton acceptor) is an active-site residue. Composition is skewed to basic and acidic residues over residues 261–290 and 323–336; these read SREH…DGRA and FDSE…RDSG. Disordered regions lie at residues 261–351 and 566–632; these read SREH…NRSQ and SPSS…VAPS. The span at 566–579 shows a compositional bias: low complexity; it reads SPSSLMPSGSSQTS. 2 stretches are compositionally biased toward polar residues: residues 580-592 and 603-629; these read RFPF…NQPS and KPTS…SPSV.

It belongs to the protein kinase superfamily. Ser/Thr protein kinase family. As to quaternary structure, interacts with sel-10. Post-translationally, probably ubiquitinated by the SCF(sel-10) and SCF(lin-23) E3 ubiquitin ligase complexes, leading to its proteasomal degradation.

It localises to the cytoplasm. Its subcellular location is the cytoskeleton. It is found in the microtubule organizing center. The protein resides in the centrosome. The protein localises to the centriole. The catalysed reaction is L-seryl-[protein] + ATP = O-phospho-L-seryl-[protein] + ADP + H(+). It carries out the reaction L-threonyl-[protein] + ATP = O-phospho-L-threonyl-[protein] + ADP + H(+). Functionally, protein kinase that plays a central role in centrosome duplication, control of centrosome size, spindle formation and nuclear envelope breakdown during cell divisions. Paternal copy is required to regulate synthesis of daughter centrioles prior to fertilization. Maternal copy regulates centrosome duplication during later cell cycles. Functions upstream of sas-5 and sas-6, and is required for their localization to the centrosome. Its role in nuclear envelope breakdown is mediated by the spindly-like protein spdl-1 and the RZZ complex, which in turn recruits the spindle checkpoint proteins mdf-1 and mdf-2, dynein and dynactin to unattached kinetochores. The polypeptide is Probable serine/threonine-protein kinase zyg-1 (Caenorhabditis elegans).